Here is a 239-residue protein sequence, read N- to C-terminus: tRNA (guanine-N(7)-)-methyltransferase (239 aa).

S-adenosyl-L-methionine-binding residues include E69, E94, D121, and D144. D144 is a catalytic residue. Residue K148 coordinates substrate. The segment at R150–R155 is interaction with RNA. Substrate is bound by residues D180 and T217–E220.

The protein belongs to the class I-like SAM-binding methyltransferase superfamily. TrmB family. As to quaternary structure, monomer.

It carries out the reaction guanosine(46) in tRNA + S-adenosyl-L-methionine = N(7)-methylguanosine(46) in tRNA + S-adenosyl-L-homocysteine. It functions in the pathway tRNA modification; N(7)-methylguanine-tRNA biosynthesis. Its function is as follows. Catalyzes the formation of N(7)-methylguanine at position 46 (m7G46) in tRNA. This is tRNA (guanine-N(7)-)-methyltransferase from Salmonella paratyphi A (strain ATCC 9150 / SARB42).